A 248-amino-acid chain; its full sequence is Transcription termination/antitermination protein NusG (248 aa).

The region spanning 197-227 (KGDQVRVIEGPFMNFTGTVEEVHPEKRKLTV) is the KOW domain.

The protein belongs to the NusG family. In terms of assembly, monomer. Homodimer.

Its function is as follows. Participates in transcription elongation, termination and antitermination. This is Transcription termination/antitermination protein NusG from Aquifex aeolicus (strain VF5).